Reading from the N-terminus, the 374-residue chain is MPLLISRFAELDLIRQPEQQDEPLQAFDAADEYLLSHVAETGLSLDSRVLVLNDSFGALAASLARHANVVSSTDSFLAAQGLEKNLARNGMAYDAVPLIPASEPLSGPFDWVLIRIPKTLALLEEQLIRLQGQLAPGARVVAAAMVKHLPRSAGDLLEEYVGPVQASLAVKKARLLFATPRPQEVRTSPYPTRYTLDEPAIELLNHANVFCRDGLDIGTRALLPCLPKNLGAARVADLGCGNGVLAIASALENPDAHYTLVDESYMAVQSATENWRAHLGERDVVLRAADGLDTQQPDSLDVVLCNPPFHQQQVVGDFLAWRMFLQARAALVTGGALYIVGNRHLGYHTKLSRLFRGVEQVAATPKFVILKARK.

This sequence belongs to the methyltransferase superfamily. RlmG family.

The protein localises to the cytoplasm. It catalyses the reaction guanosine(1835) in 23S rRNA + S-adenosyl-L-methionine = N(2)-methylguanosine(1835) in 23S rRNA + S-adenosyl-L-homocysteine + H(+). Specifically methylates the guanine in position 1835 (m2G1835) of 23S rRNA. The polypeptide is Ribosomal RNA large subunit methyltransferase G (Pseudomonas syringae pv. tomato (strain ATCC BAA-871 / DC3000)).